Reading from the N-terminus, the 481-residue chain is uncharacterized protein (481 aa).

It belongs to the metallophosphoesterase superfamily.

This is an uncharacterized protein from Bacillus subtilis (strain 168).